The primary structure comprises 404 residues: Peroxisomal biogenesis factor 9 (404 aa).

3 consecutive transmembrane segments (helical) span residues 73–93 (FLFLGVTLFLFLSLLQQSLVF), 94–114 (LLGVFLRLVQLVGHFLLLLMG), and 149–169 (FGLDVVTAIVVIGDNELFQVV). A disordered region spans residues 180–214 (DGQRSQQSQNSGMNVASSSRGRHQLVPDRPGSQLS). The span at 181–198 (GQRSQQSQNSGMNVASSS) shows a compositional bias: polar residues. A helical membrane pass occupies residues 349-369 (FFVGLVSWIVDETAACVVFCL).

The protein localises to the peroxisome membrane. In terms of biological role, essential for the import of peroxisomal matrix proteins. In Yarrowia lipolytica (strain CLIB 122 / E 150) (Yeast), this protein is Peroxisomal biogenesis factor 9 (PEX9).